The following is a 372-amino-acid chain: MKAGATSMWASCCGLLNEVMGTGAVRGQQSAFAGATGPFRFTPNPEFSTYPPAATEGPNIVCKACGLSFSVFRKKHVCCDCKKDFCSVCSVLQENLRRCSTCHLLQETAFQRPQLMRLKVKDLRQYLILRNIPIDTCREKEDLVDLVLCHHGLGSEDDMDTSSLNSSRSQTSSFFTRSFFSNYTAPSATMSSFQGELMDGDQTSRSGVPAQVQSEITSANTEDDDDDDDEDDDDEEENAEDRNPGLSKERVRASLSDLSSLDDVEGMSVRQLKEILARNFVNYSGCCEKWELVEKVNRLYKENEENQKSYGERLQLQDEEDDSLCRICMDAVIDCVLLECGHMVTCTKCGKRMSECPICRQYVVRAVHVFKS.

The segment at 56 to 107 adopts an FYVE-type zinc-finger fold; the sequence is EGPNIVCKACGLSFSVFRKKHVCCDCKKDFCSVCSVLQENLRRCSTCHLLQE. One can recognise an SAP 1 domain in the interval 115–134; the sequence is LMRLKVKDLRQYLILRNIPI. At Ser-169 the chain carries Phosphoserine. Positions 194-253 are disordered; it reads QGELMDGDQTSRSGVPAQVQSEITSANTEDDDDDDDEDDDDEEENAEDRNPGLSKERVRA. The span at 201–220 shows a compositional bias: polar residues; it reads DQTSRSGVPAQVQSEITSAN. The segment covering 221-239 has biased composition (acidic residues); that stretch reads TEDDDDDDDEDDDDEEENA. A compositionally biased stretch (basic and acidic residues) spans 240–252; that stretch reads EDRNPGLSKERVR. 2 positions are modified to phosphoserine: Ser-254 and Ser-256. In terms of domain architecture, SAP 2 spans 264–278; the sequence is VEGMSVRQLKEILAR. The RING-type zinc-finger motif lies at 325–360; it reads CRICMDAVIDCVLLECGHMVTCTKCGKRMSECPICR.

Interacts with CASP8 and CASP10. Interacts (via RING-type zinc finger) with PPARGC1A. Interacts with NOD1. Interacts with p53/TP53; involved in p53/TP53 ubiquitination. Interacts (via RING-type zinc finger) with MDM2; the interaction stabilizes MDM2. In terms of processing, autoubiquitinated (in vitro). Proteolytically cleaved by caspases upon induction of apoptosis by TNF. Ubiquitous. Detected in heart, brain, liver, skeletal muscle, kidney, pancreas, spleen, thymus, prostate, testis, ovary, colon and leukocytes.

It localises to the cell membrane. Its subcellular location is the endomembrane system. The protein localises to the nucleus. It is found in the nucleus speckle. The protein resides in the cytoplasm. It localises to the cytosol. It carries out the reaction S-ubiquitinyl-[E2 ubiquitin-conjugating enzyme]-L-cysteine + [acceptor protein]-L-lysine = [E2 ubiquitin-conjugating enzyme]-L-cysteine + N(6)-ubiquitinyl-[acceptor protein]-L-lysine.. Its pathway is protein modification; protein ubiquitination. Its function is as follows. E3 ubiquitin-protein ligase that regulates several biological processes through the ubiquitin-mediated proteasomal degradation of various target proteins. Ubiquitinates the caspases CASP8 and CASP10, promoting their proteasomal degradation, to negatively regulate cell death downstream of death domain receptors in the extrinsic pathway of apoptosis. May mediate 'Lys-48'-linked polyubiquitination of RIPK1 and its subsequent proteasomal degradation thereby indirectly regulating the tumor necrosis factor-mediated signaling pathway. Negatively regulates p53/TP53 through its direct ubiquitination and targeting to proteasomal degradation. Indirectly, may also negatively regulate p53/TP53 through ubiquitination and degradation of SFN. Mediates PPARGC1A proteasomal degradation probably through ubiquitination thereby indirectly regulating the metabolism of brown fat cells. Possibly involved in innate immunity, through 'Lys-48'-linked polyubiquitination of NOD1 and its subsequent proteasomal degradation. This Homo sapiens (Human) protein is E3 ubiquitin-protein ligase RNF34.